Consider the following 161-residue polypeptide: Allophycocyanin alpha chain (161 aa).

Asparagine 71 is subject to N4-methylasparagine. Cysteine 81 provides a ligand contact to (2R,3E)-phycocyanobilin.

This sequence belongs to the phycobiliprotein family. Component of the phycobilisome. Heterodimer of an alpha and a beta chain. Contains one covalently linked phycocyanobilin chromophore.

It is found in the cellular thylakoid membrane. Light-harvesting photosynthetic bile pigment-protein from the phycobiliprotein complex. Allophycocyanin has a maximum absorption at approximately 650 nanometers. In Arthrospira platensis (Spirulina platensis), this protein is Allophycocyanin alpha chain (apcA).